A 365-amino-acid chain; its full sequence is 3,4-dihydroxy-2-butanone 4-phosphate synthase (365 aa).

The DHBP synthase stretch occupies residues 1-201 (MALNTIDELI…IADLIHYRLI (201 aa)). D-ribulose 5-phosphate-binding positions include 27 to 28 (RE), Asp32, 140 to 144 (RAGHT), and Glu164. A Mg(2+)-binding site is contributed by Glu28. His143 lines the Mg(2+) pocket. The segment at 202-365 (HERTVERIAE…LEVVEYLPAE (164 aa)) is GTP cyclohydrolase II-like.

In the N-terminal section; belongs to the DHBP synthase family. This sequence in the C-terminal section; belongs to the GTP cyclohydrolase II family. Mg(2+) serves as cofactor. Requires Mn(2+) as cofactor.

The catalysed reaction is D-ribulose 5-phosphate = (2S)-2-hydroxy-3-oxobutyl phosphate + formate + H(+). The protein operates within cofactor biosynthesis; riboflavin biosynthesis; 2-hydroxy-3-oxobutyl phosphate from D-ribulose 5-phosphate: step 1/1. In terms of biological role, catalyzes the conversion of D-ribulose 5-phosphate to formate and 3,4-dihydroxy-2-butanone 4-phosphate. This chain is 3,4-dihydroxy-2-butanone 4-phosphate synthase (ribB), found in Pseudomonas aeruginosa (strain ATCC 15692 / DSM 22644 / CIP 104116 / JCM 14847 / LMG 12228 / 1C / PRS 101 / PAO1).